We begin with the raw amino-acid sequence, 601 residues long: Cdc42-interacting protein 4 (601 aa).

The required for translocation to the plasma membrane in response to insulin, podosome formation and interaction with AKAP9 and microtubules stretch occupies residues 1–117; sequence MDWGTELWDQ…EMKQERKMHF (117 aa). The 264-residue stretch at 1-264 folds into the F-BAR domain; it reads MDWGTELWDQ…AANAVDPKND (264 aa). A coiled-coil region spans residues 67–259; that stretch reads FSQQQSFVQI…EGMKVAANAV (193 aa). 3 disordered regions span residues 280–358, 390–420, and 478–543; these read GDVE…GRDP, DFSH…EVDQ, and NRGD…SPIG. Positions 289–302 are enriched in polar residues; it reads QPMNRAPSDSSLGT. Positions 293–537 are interaction with CDC42; that stretch reads RAPSDSSLGT…TEFDEDFEEE (245 aa). The interval 293 to 601 is interaction with PDE6G; sequence RAPSDSSLGT…PTSYLRVTLN (309 aa). Ser-296, Ser-298, and Ser-299 each carry phosphoserine. The span at 314–329 shows a compositional bias: basic residues; it reads GRSRTKRWPFGKKNKP. Ser-335 carries the phosphoserine modification. The span at 336 to 346 shows a compositional bias: low complexity; it reads PLGGPVPSALP. Ser-351 carries the post-translational modification Phosphoserine. Residues 388-481 are a coiled coil; sequence TEDFSHLPPE…ESRVLSNRGD (94 aa). In terms of domain architecture, REM-1 spans 393-470; that stretch reads HLPPEQQRKR…VQKYEAWLAE (78 aa). Over residues 407–420 the composition is skewed to basic and acidic residues; it reads LEERSRELQKEVDQ. Residues 471–601 form a required for interaction with FASLG and localization to lysosomes region; it reads AESRVLSNRG…PTSYLRVTLN (131 aa). At Ser-482 the chain carries Phosphoserine. The interval 487-541 is interaction with DNM2 and WASL; the sequence is ARPPDPPTSAPPDSSSNSASQDTKESSEEPPSEESQDTPIYTEFDEDFEEEPTSP. The segment covering 497 to 506 has biased composition (low complexity); sequence PPDSSSNSAS. Acidic residues predominate over residues 529–538; sequence EFDEDFEEEP. The interval 529–601 is interaction with DNM1 and WASL; it reads EFDEDFEEEP…PTSYLRVTLN (73 aa). Residues 538–601 are required for podosome formation; that stretch reads PTSPIGHCVA…PTSYLRVTLN (64 aa). The region spanning 540-601 is the SH3 domain; the sequence is SPIGHCVAIY…PTSYLRVTLN (62 aa). An interaction with WAS region spans residues 544–601; sequence HCVAIYHFEGSSEGTISMAEGEDLSLMEEDKGDGWTRVRRKEGGEGYVPTSYLRVTLN. Residues 546–601 form an interaction with ARHGAP17, DAAM1, DIAPH1 and DIAPH2 region; that stretch reads VAIYHFEGSSEGTISMAEGEDLSLMEEDKGDGWTRVRRKEGGEGYVPTSYLRVTLN.

Belongs to the FNBP1 family. Homodimerizes, the dimers can polymerize end-to-end to form filamentous structures. Interacts with AKAP9, ARHGAP17, DAAM1, DIAPH1, DIAPH2, DNM1, FASLG/FASL, GAPVD1, LYN, microtubules, PDE6G, SRC and WAS/WASP. Interacts with the ligand binding domain of the thyroid receptor (TR) in the presence of thyroid hormone. May interact with CTNNB1 and HD/HTT. Interacts specifically with GTP-bound CDC42 and RHOQ. Interacts with DNM2 and WASL. Tyrosine phosphorylated. Also phosphorylated by PKA.

The protein localises to the cytoplasm. It is found in the cytoskeleton. It localises to the cell cortex. The protein resides in the lysosome. Its subcellular location is the golgi apparatus. The protein localises to the cell membrane. It is found in the cell projection. It localises to the phagocytic cup. In terms of biological role, required to coordinate membrane tubulation with reorganization of the actin cytoskeleton during endocytosis. Also acts as a link between CDC42 signaling and regulation of the actin cytoskeleton. Binds to lipids such as phosphatidylinositol 4,5-bisphosphate and phosphatidylserine and promotes membrane invagination and the formation of tubules. Also enhances actin polymerization in the vicinity of membrane tubules by recruiting WASL/N-WASP which in turn activates the Arp2/3 complex. Actin polymerization and dynamin may promote the fission of membrane tubules to form endocytic vesicles. Required for the formation of podosomes, actin-rich adhesion structures specific to monocyte-derived cells. Required for translocation of GLUT4 to the plasma membrane in response to insulin signaling. May be required for the lysosomal retention of FASLG/FASL. This is Cdc42-interacting protein 4 (TRIP10) from Pongo abelii (Sumatran orangutan).